Reading from the N-terminus, the 206-residue chain is Protein GrpE (206 aa).

The protein belongs to the GrpE family. In terms of assembly, homodimer.

The protein localises to the cytoplasm. Its function is as follows. Participates actively in the response to hyperosmotic and heat shock by preventing the aggregation of stress-denatured proteins, in association with DnaK and GrpE. It is the nucleotide exchange factor for DnaK and may function as a thermosensor. Unfolded proteins bind initially to DnaJ; upon interaction with the DnaJ-bound protein, DnaK hydrolyzes its bound ATP, resulting in the formation of a stable complex. GrpE releases ADP from DnaK; ATP binding to DnaK triggers the release of the substrate protein, thus completing the reaction cycle. Several rounds of ATP-dependent interactions between DnaJ, DnaK and GrpE are required for fully efficient folding. This Psychromonas ingrahamii (strain DSM 17664 / CCUG 51855 / 37) protein is Protein GrpE.